A 502-amino-acid chain; its full sequence is Arabinose import ATP-binding protein AraG (502 aa).

2 ABC transporter domains span residues 6–241 (LEFD…MVGR) and 252–497 (REVG…MVES). 38 to 45 (GENGAGKS) is an ATP binding site.

This sequence belongs to the ABC transporter superfamily. Arabinose importer (TC 3.A.1.2.2) family. As to quaternary structure, the complex is composed of two ATP-binding proteins (AraG), two transmembrane proteins (AraH) and a solute-binding protein (AraF).

The protein localises to the cell inner membrane. The catalysed reaction is L-arabinose(out) + ATP + H2O = L-arabinose(in) + ADP + phosphate + H(+). Functionally, part of the ABC transporter complex AraFGH involved in arabinose import. Responsible for energy coupling to the transport system. This Mannheimia succiniciproducens (strain KCTC 0769BP / MBEL55E) protein is Arabinose import ATP-binding protein AraG.